The following is a 147-amino-acid chain: Hemoglobin subunit beta (147 aa).

V2 carries the N-acetylvaline modification. Positions 3–147 (HLTGEEKSAV…VANALAHKYH (145 aa)) constitute a Globin domain. The residue at position 13 (T13) is a Phosphothreonine. Residue S45 is modified to Phosphoserine. K60 bears the N6-acetyllysine mark. Position 64 (H64) interacts with heme b. At K83 the chain carries N6-acetyllysine. H93 contributes to the heme b binding site. An S-nitrosocysteine modification is found at C94. The residue at position 145 (K145) is an N6-acetyllysine.

This sequence belongs to the globin family. As to quaternary structure, heterotetramer of two alpha chains and two beta chains. Red blood cells.

Its function is as follows. Involved in oxygen transport from the lung to the various peripheral tissues. The protein is Hemoglobin subunit beta (HBB) of Ateles paniscus (Black spider monkey).